Reading from the N-terminus, the 208-residue chain is NADH-ubiquinone oxidoreductase chain 4 (208 aa).

Transmembrane regions (helical) follow at residues 23–43 (VWINVTSYSFVINMIALVTLW), 60–80 (SLSSPLTMLTIWLLPLMLLAS), 93–113 (KMYISLLITLQVLLIMTFSAN), 114–134 (ELIMFYILFEATLIPTLIIIT), 147–167 (LYFLFYTLIGSIPLLIALISI), and 188–208 (PTWSSHILWLACIMAFMIKMP).

It belongs to the complex I subunit 4 family. As to quaternary structure, core subunit of respiratory chain NADH dehydrogenase (Complex I) which is composed of 45 different subunits.

It localises to the mitochondrion inner membrane. It carries out the reaction a ubiquinone + NADH + 5 H(+)(in) = a ubiquinol + NAD(+) + 4 H(+)(out). In terms of biological role, core subunit of the mitochondrial membrane respiratory chain NADH dehydrogenase (Complex I) which catalyzes electron transfer from NADH through the respiratory chain, using ubiquinone as an electron acceptor. Essential for the catalytic activity and assembly of complex I. This chain is NADH-ubiquinone oxidoreductase chain 4 (MT-ND4), found in Phodopus sungorus (Striped hairy-footed hamster).